Consider the following 145-residue polypeptide: Large ribosomal subunit protein bL9 (145 aa).

It belongs to the bacterial ribosomal protein bL9 family.

In terms of biological role, binds to the 23S rRNA. The protein is Large ribosomal subunit protein bL9 of Mesomycoplasma hyopneumoniae (strain J / ATCC 25934 / NCTC 10110) (Mycoplasma hyopneumoniae).